A 534-amino-acid polypeptide reads, in one-letter code: ATP synthase subunit beta 2 (534 aa).

The segment covering 1–10 (MADPQATNGT) has biased composition (polar residues). The tract at residues 1 to 30 (MADPQATNGTGAACAERDASDVGDVSDVGD) is disordered. 185-192 (GGAGVGKT) is a binding site for ATP. Residues 494-505 (AAAREADARREA) show a composition bias toward basic and acidic residues. The tract at residues 494 to 534 (AAAREADARREAAAAASGAGPGTTSDPASGSAEPQGARHGR) is disordered.

This sequence belongs to the ATPase alpha/beta chains family. In terms of assembly, F-type ATPases have 2 components, CF(1) - the catalytic core - and CF(0) - the membrane proton channel. CF(1) has five subunits: alpha(3), beta(3), gamma(1), delta(1), epsilon(1). CF(0) has three main subunits: a(1), b(2) and c(9-12). The alpha and beta chains form an alternating ring which encloses part of the gamma chain. CF(1) is attached to CF(0) by a central stalk formed by the gamma and epsilon chains, while a peripheral stalk is formed by the delta and b chains.

It localises to the cell inner membrane. The catalysed reaction is ATP + H2O + 4 H(+)(in) = ADP + phosphate + 5 H(+)(out). Its function is as follows. Produces ATP from ADP in the presence of a proton gradient across the membrane. The catalytic sites are hosted primarily by the beta subunits. This Burkholderia pseudomallei (strain 668) protein is ATP synthase subunit beta 2.